Reading from the N-terminus, the 89-residue chain is Dynein light chain 2, cytoplasmic (89 aa).

Belongs to the dynein light chain family.

It is found in the cytoplasm. The protein resides in the cytoskeleton. In terms of biological role, acts as a non-catalytic accessory component of a dynein complex. The protein is Dynein light chain 2, cytoplasmic (Cdlc2) of Drosophila melanogaster (Fruit fly).